The chain runs to 166 residues: uncharacterized protein (166 aa).

3 helical membrane passes run 4–24 (LNIFPCGLFSYIALLCLEASI), 101–121 (LITCSGAMVFLASLSAISEAI), and 146–166 (SWSSISDIIFCTVAKIIQCFL).

It localises to the membrane. This is an uncharacterized protein from Saccharomyces cerevisiae (strain ATCC 204508 / S288c) (Baker's yeast).